The primary structure comprises 352 residues: MNFIHDYRSPRVIFGPDSLARLPQELERLGIDRALVLTTPEQAPLGRQVAEPVIGHVAAFYDGATMHVPALVAEEACKIARTSEANGVIAIGGGSTIGLAKIVALRTELPIVAVPTTYAGSEMTSIFGITEGGVKKTGRDARVMPRAVIYEPRLTLELPLSISVTSAINAIAHAVEGLYAPDATPLLTIMAQEGIAATVRAISRMYQSPRDLQARGDALYGAWLCASVVGNVSMALHHKLCHTLGGTLDLPHAQTHTVVLPHALAYNARAVPDAMRVLRIALGHDDPPTALYELARDNGAPVALRDLGMREEDIEHVGDLALQDRYPNPRELDRDALLALLRDAYHGRPPSA.

The protein belongs to the iron-containing alcohol dehydrogenase family.

The catalysed reaction is 3-oxoadipate + NAD(+) = maleylacetate + NADH + H(+). It carries out the reaction 3-oxoadipate + NADP(+) = maleylacetate + NADPH + H(+). It participates in aromatic compound metabolism; 3-chlorocatechol degradation. This Pseudomonas aeruginosa protein is Maleylacetate reductase (clcE).